We begin with the raw amino-acid sequence, 30 residues long: Pyrrole-2-carboxylate oxygenase (30 aa).

Homotrimer. Requires FAD as cofactor.

The catalysed reaction is pyrrole-2-carboxylate + NADH + O2 + H(+) = 5-hydroxypyrrole-2-carboxylate + NAD(+) + H2O. Monooxygenase that initiates the degradation of pyrrole-2-carboxylate, which allows Arthrobacter sp. strain Py1 to grow on pyrrole-2-carboxylate as sole carbon, nitrogen, and energy source. To a lesser extent, can also use pyrrole, pyrrole-2-aldehyde, and indole-2-carboxylate as substrate. The protein is Pyrrole-2-carboxylate oxygenase of Arthrobacter sp. (strain Py1).